We begin with the raw amino-acid sequence, 245 residues long: tRNA pseudouridine synthase A (245 aa).

The active-site Nucleophile is D52. Y110 lines the substrate pocket.

Belongs to the tRNA pseudouridine synthase TruA family. In terms of assembly, homodimer.

It carries out the reaction uridine(38/39/40) in tRNA = pseudouridine(38/39/40) in tRNA. Functionally, formation of pseudouridine at positions 38, 39 and 40 in the anticodon stem and loop of transfer RNAs. In Borrelia hermsii (strain HS1 / DAH), this protein is tRNA pseudouridine synthase A.